Here is a 273-residue protein sequence, read N- to C-terminus: Putative phosphoenolpyruvate synthase regulatory protein (273 aa).

Ala-153 to Thr-160 contributes to the ADP binding site.

This sequence belongs to the pyruvate, phosphate/water dikinase regulatory protein family. PSRP subfamily.

It carries out the reaction [pyruvate, water dikinase] + ADP = [pyruvate, water dikinase]-phosphate + AMP + H(+). The catalysed reaction is [pyruvate, water dikinase]-phosphate + phosphate + H(+) = [pyruvate, water dikinase] + diphosphate. Its function is as follows. Bifunctional serine/threonine kinase and phosphorylase involved in the regulation of the phosphoenolpyruvate synthase (PEPS) by catalyzing its phosphorylation/dephosphorylation. The protein is Putative phosphoenolpyruvate synthase regulatory protein of Xanthomonas campestris pv. campestris (strain ATCC 33913 / DSM 3586 / NCPPB 528 / LMG 568 / P 25).